Reading from the N-terminus, the 906-residue chain is Glutamate receptor 1 (906 aa).

The signal sequence occupies residues 1–18 (MQHIFAFFCTGFLGAVVG). The Extracellular portion of the chain corresponds to 19–536 (ANFPNNIQIG…GVFSFLDPLA (518 aa)). Residues Asn63, Asn249, Asn257, Asn363, Asn401, and Asn406 are each glycosylated (N-linked (GlcNAc...) asparagine). Cys75 and Cys323 form a disulfide bridge. L-glutamate is bound by residues Pro492, Thr494, and Arg499. Residues 537–557 (YEIWMCIVFAYIGVSVVLFLV) form a helical membrane-spanning segment. The Cytoplasmic portion of the chain corresponds to 558–584 (SRFSPYEWHSEEFEEGRDQTTSDQSNE). Positions 585 to 600 (FGIFNSLWFSLGAFMQ) form an intramembrane region, helical; Pore-forming. An intramembrane segment occupies 601 to 603 (QGC). Cys603 carries S-palmitoyl cysteine lipidation. Residues 604-609 (DISPRS) lie on the Cytoplasmic side of the membrane. The helical transmembrane segment at 610-630 (LSGRIVGGVWWFFTLIIISSY) threads the bilayer. Over 631–805 (TANLAAFLTV…DKTSALSLSN (175 aa)) the chain is Extracellular. Ser645 is modified (phosphoserine). L-glutamate is bound by residues Ser668 and Thr669. The residue at position 710 (Ser710) is a Phosphoserine. An L-glutamate-binding site is contributed by Glu719. Cys732 and Cys787 are disulfide-bonded. A helical transmembrane segment spans residues 806-826 (VAGVFYILIGGLGLAMLVALI). The Cytoplasmic portion of the chain corresponds to 827-906 (EFCYKSRSES…SGMPLGATGL (80 aa)). Residue Cys829 is the site of S-palmitoyl cysteine attachment. Residues Ser849 and Ser863 each carry the phosphoserine modification. The disordered stretch occupies residues 861–880 (RNSGAGASSAGSGENGRVVS). Positions 863-872 (SGAGASSAGS) are enriched in low complexity. The PDZ-binding signature appears at 903 to 906 (ATGL).

It belongs to the glutamate-gated ion channel (TC 1.A.10.1) family. GRIA1 subfamily. Homotetramer or heterotetramer of pore-forming glutamate receptor subunits; heteromeric assembly can be the result of both receptor subtype and flip-flop forms and according the composition, one partner can be dominant with respect to the fast desensitizing current component, whereas the other can determine the steady-state component. Tetramers may be formed by the dimerization of dimers. Found in a complex with GRIA2, GRIA3, GRIA4, CNIH2, CNIH3, CACNG2, CACNG3, CACNG4, CACNG5, CACNG7 and CACNG8. Interacts with HIP1 and RASGRF2. Interacts with SYNDIG1 and GRIA2. Interacts with DLG1 (via C-terminus). Interacts with LRFN1. Interacts with PRKG2. Interacts with CNIH2 and CACNG2. Interacts with CACNG5; this interaction modulates the gating. Interacts (via C-terminus) with PDLIM4 (via LIM domain); this interaction as well as the interaction of PDLIM4 with alpha-actinin is required for their colocalization in early endosomes. Interacts with SNX27 (via PDZ domain); the interaction is required for recycling to the plasma membrane when endocytosed and prevent degradation in lysosomes. Interacts (via PDZ-binding motif) with SHANK3 (via PDZ domain). Interacts with CACNG3; associates GRIA1 with the adapter protein complex 4 (AP-4) to target GRIA1 to the somatodendritic compartment of neurons. Interacts with CACNG2; this interaction mediates traffick to the plasma membrane and modulation of desensitization. Interaction with CNIH2 and CNIH3; this interaction promotes expression at the plasma membrane and extensively modulates their gating properties by slowing deactivation and desensitization kinetics. Found in a complex with GRIA2, GRIA3, GRIA4, DLG4, CACNG8 and CNIH2. Post-translationally, phosphorylated at Ser-645. Phosphorylated at Ser-710 by PKC. Phosphorylated at Ser-849 by PKC, PKA and CAMK2. Phosphorylated at Ser-863 by PKC, PKA and PRKG2. Phosphorylation of Ser-863 is reduced by induction of long-term depression and increased by induction of long-term potentiation. In terms of processing, palmitoylated. Depalmitoylated by CPT1C and upon L-glutamate stimulation. ZDHHC3/GODZ specifically palmitoylates Cys-603, which leads to Golgi retention and decreased cell surface expression. In contrast, Cys-829 palmitoylation does not affect cell surface expression but regulates stimulation-dependent endocytosis.

It is found in the cell membrane. The protein localises to the endoplasmic reticulum membrane. The protein resides in the postsynaptic cell membrane. It localises to the postsynaptic density membrane. Its subcellular location is the cell projection. It is found in the dendrite. The protein localises to the dendritic spine. The protein resides in the early endosome membrane. It localises to the recycling endosome membrane. Its subcellular location is the presynapse. It is found in the synapse. It catalyses the reaction Ca(2+)(in) = Ca(2+)(out). The enzyme catalyses Na(+)(in) = Na(+)(out). The catalysed reaction is Mg(2+)(in) = Mg(2+)(out). It carries out the reaction Li(+)(in) = Li(+)(out). It catalyses the reaction K(+)(in) = K(+)(out). The enzyme catalyses Sr(2+)(in) = Sr(2+)(out). Ionotropic glutamate receptor that functions as a ligand-gated cation channel, gated by L-glutamate and glutamatergic agonists such as alpha-amino-3-hydroxy-5-methyl-4-isoxazolepropionic acid (AMPA), quisqualic acid, and kainic acid. L-glutamate acts as an excitatory neurotransmitter at many synapses in the central nervous system. Binding of the excitatory neurotransmitter L-glutamate induces a conformation change, leading to the opening of the cation channel, and thereby converts the chemical signal to an electrical impulse upon entry of monovalent and divalent cations such as sodium and calcium. The receptor then desensitizes rapidly and enters in a transient inactive state, characterized by the presence of bound agonist. In the presence of CACNG2 or CACNG4 or CACNG7 or CACNG8, shows resensitization which is characterized by a delayed accumulation of current flux upon continued application of L-glutamate. Calcium (Ca(2+)) permeability depends on subunits composition and, heteromeric channels containing edited GRIA2 subunit are calcium-impermeable. Also permeable to other divalents cations such as strontium(2+) and magnesium(2+) and monovalent cations such as potassium(1+) and lithium(1+). In Macaca fascicularis (Crab-eating macaque), this protein is Glutamate receptor 1.